The chain runs to 298 residues: GTPase Era (298 aa).

Residues 8–176 enclose the Era-type G domain; sequence RSGSVAVIGR…VSDLLKLVPE (169 aa). The tract at residues 16-23 is G1; sequence GRPNVGKS. 16–23 contacts GTP; that stretch reads GRPNVGKS. A G2 region spans residues 42 to 46; sequence QTTRH. Positions 63 to 66 are G3; sequence DTPG. Residues 63–67 and 125–128 contribute to the GTP site; these read DTPGL and NKVD. The segment at 125–128 is G4; that stretch reads NKVD. Residues 155-157 are G5; the sequence is VSA. The region spanning 199–283 is the KH type-2 domain; the sequence is VREQLMRQLG…FLETWVRVRE (85 aa).

The protein belongs to the TRAFAC class TrmE-Era-EngA-EngB-Septin-like GTPase superfamily. Era GTPase family. In terms of assembly, monomer.

It localises to the cytoplasm. It is found in the cell inner membrane. Its function is as follows. An essential GTPase that binds both GDP and GTP, with rapid nucleotide exchange. Plays a role in 16S rRNA processing and 30S ribosomal subunit biogenesis and possibly also in cell cycle regulation and energy metabolism. This chain is GTPase Era, found in Xanthomonas campestris pv. campestris (strain 8004).